Here is a 101-residue protein sequence, read N- to C-terminus: NAD(P)H-quinone oxidoreductase subunit 4L, chloroplastic (101 aa).

The next 3 membrane-spanning stretches (helical) occupy residues 2 to 22, 32 to 52, and 61 to 81; these read MLEYALVLSAFLFSIGIYGLI, MCLELILNAVNMNLVTFSYFF, and IFSIFIIAIAAAEAAIGLAIV.

It belongs to the complex I subunit 4L family. NDH is composed of at least 16 different subunits, 5 of which are encoded in the nucleus.

Its subcellular location is the plastid. It localises to the chloroplast thylakoid membrane. It catalyses the reaction a plastoquinone + NADH + (n+1) H(+)(in) = a plastoquinol + NAD(+) + n H(+)(out). The enzyme catalyses a plastoquinone + NADPH + (n+1) H(+)(in) = a plastoquinol + NADP(+) + n H(+)(out). NDH shuttles electrons from NAD(P)H:plastoquinone, via FMN and iron-sulfur (Fe-S) centers, to quinones in the photosynthetic chain and possibly in a chloroplast respiratory chain. The immediate electron acceptor for the enzyme in this species is believed to be plastoquinone. Couples the redox reaction to proton translocation, and thus conserves the redox energy in a proton gradient. The polypeptide is NAD(P)H-quinone oxidoreductase subunit 4L, chloroplastic (Ipomoea purpurea (Common morning glory)).